The following is a 191-amino-acid chain: Imidazoleglycerol-phosphate dehydratase (191 aa).

Belongs to the imidazoleglycerol-phosphate dehydratase family.

Its subcellular location is the cytoplasm. It catalyses the reaction D-erythro-1-(imidazol-4-yl)glycerol 3-phosphate = 3-(imidazol-4-yl)-2-oxopropyl phosphate + H2O. The protein operates within amino-acid biosynthesis; L-histidine biosynthesis; L-histidine from 5-phospho-alpha-D-ribose 1-diphosphate: step 6/9. The polypeptide is Imidazoleglycerol-phosphate dehydratase (Thermodesulfovibrio yellowstonii (strain ATCC 51303 / DSM 11347 / YP87)).